Consider the following 147-residue polypeptide: uncharacterized protein (147 aa).

The helical transmembrane segment at Ala3–Ser23 threads the bilayer.

The protein to M.leprae ML1147.

It is found in the membrane. This is an uncharacterized protein from Mycobacterium tuberculosis (strain CDC 1551 / Oshkosh).